The following is a 278-amino-acid chain: MDRLYHPAPSRTDCADAAVLRVRGGIVGAATQSDRVAEETPVALEYNGISHATMLASPADLEDYALGFSLTEGIVERPADVRGIEIVPQFNGIVVQVEISSACAARLKTRRRAMAGRTGCGLCGVETLPEVLRQVPTVADAAPVPLTAVLHGMRAMRGSQALHDITGATHAAAWADAEGRVQLVREDVGRHNALDKLVGALARQAIDPRSGMVLVSSRASFEMVQKCAAAGIGILAAVSAPTALAIRVAQNTNVALLGFVRNADAAIYSHPERLRLRP.

The Cysteine persulfide intermediate role is filled by Cys120.

This sequence belongs to the FdhD family.

The protein localises to the cytoplasm. Functionally, required for formate dehydrogenase (FDH) activity. Acts as a sulfur carrier protein that transfers sulfur from IscS to the molybdenum cofactor prior to its insertion into FDH. The polypeptide is Sulfur carrier protein FdhD (Bordetella petrii (strain ATCC BAA-461 / DSM 12804 / CCUG 43448)).